Consider the following 350-residue polypeptide: tRNA uridine(34) hydroxylase (350 aa).

The 95-residue stretch at 146 to 240 folds into the Rhodanese domain; that stretch reads DDPDAVFIDM…YARRAREQGL (95 aa). The active-site Cysteine persulfide intermediate is the Cys-200. Residues 319–328 show a composition bias toward basic and acidic residues; the sequence is RRRRAGRENG. Positions 319–350 are disordered; the sequence is RRRRAGRENGNKIFNKSRGRLNSKLSIPDPAE.

The protein belongs to the TrhO family.

The enzyme catalyses uridine(34) in tRNA + AH2 + O2 = 5-hydroxyuridine(34) in tRNA + A + H2O. Functionally, catalyzes oxygen-dependent 5-hydroxyuridine (ho5U) modification at position 34 in tRNAs. This Salmonella typhi protein is tRNA uridine(34) hydroxylase.